The chain runs to 221 residues: Octanoyltransferase (221 aa).

Residues 31-213 form the BPL/LPL catalytic domain; it reads DKSADEIWLV…HFVTILGYNK (183 aa). Substrate-binding positions include 70-77, 142-144, and 155-157; these read RGGQITYH, SLG, and GLA. Catalysis depends on Cys173, which acts as the Acyl-thioester intermediate.

It belongs to the LipB family.

The protein localises to the cytoplasm. It carries out the reaction octanoyl-[ACP] + L-lysyl-[protein] = N(6)-octanoyl-L-lysyl-[protein] + holo-[ACP] + H(+). It functions in the pathway protein modification; protein lipoylation via endogenous pathway; protein N(6)-(lipoyl)lysine from octanoyl-[acyl-carrier-protein]: step 1/2. Catalyzes the transfer of endogenously produced octanoic acid from octanoyl-acyl-carrier-protein onto the lipoyl domains of lipoate-dependent enzymes. Lipoyl-ACP can also act as a substrate although octanoyl-ACP is likely to be the physiological substrate. This Mannheimia succiniciproducens (strain KCTC 0769BP / MBEL55E) protein is Octanoyltransferase.